We begin with the raw amino-acid sequence, 365 residues long: Leu/Ile/Val/Thr-binding protein (365 aa).

Residues 1–21 form the signal peptide; that stretch reads MKGKTLLAGCIALSLSHMAFA. An intrachain disulfide couples Cys74 to Cys99.

It belongs to the leucine-binding protein family.

The protein localises to the periplasm. This protein is a component of the leucine, isoleucine, valine, threonine transport system, which is one of the two periplasmic binding protein-dependent transport systems of the high-affinity transport of the branched-chain amino acids. This chain is Leu/Ile/Val/Thr-binding protein (livJ), found in Salmonella typhimurium (strain LT2 / SGSC1412 / ATCC 700720).